Reading from the N-terminus, the 909-residue chain is SCY1-like protein 2 B (909 aa).

The 305-residue stretch at 39–343 (YELLDQIGSA…ALDFTGSNFF (305 aa)) folds into the Protein kinase domain. HEAT repeat units lie at residues 311-348 (SIPS…SDAR), 350-382 (RALR…DFDS), 383-401 (RVLR…RNLV), 402-439 (LQPI…TASG), 465-502 (VLPL…VVRQ), 499-537 (VVRQ…TLDK), and 578-617 (FTAE…KIEE). Disordered regions lie at residues 624-772 (NDSG…VAST) and 804-909 (SASL…LDLL). 5 stretches are compositionally biased toward polar residues: residues 638–648 (NGLQFQSSTQI), 678–712 (PASS…TAPT), 724–747 (RQSS…TSFA), 804–828 (SASL…QDPL), and 835–852 (KQSQ…NNQK).

Belongs to the protein kinase superfamily. Interacts with VTI11, VTI12 and CHC1. Expressed in roots, seedlings, leaves, stems, flowers, and, at low levels, in siliques.

Its subcellular location is the golgi apparatus membrane. The protein resides in the golgi apparatus. It is found in the trans-Golgi network membrane. The protein localises to the prevacuolar compartment membrane. Its function is as follows. Probably inactive kinase. Component of the AP2-containing clathrin coat that regulates clathrin-dependent trafficking at plasma membrane, TGN and endosomal system. Together with SCYL2B, required for cell growth, plant growth and development. Essential for polarized root hair development probably by mediating the root hair tip localization of cellulose synthase-like D3 (CSLD3). The protein is SCY1-like protein 2 B of Arabidopsis thaliana (Mouse-ear cress).